The following is a 219-amino-acid chain: Ribosomal RNA large subunit methyltransferase E (219 aa).

Residues G60, W62, D80, D96, and D120 each contribute to the S-adenosyl-L-methionine site. Catalysis depends on K160, which acts as the Proton acceptor.

The protein belongs to the class I-like SAM-binding methyltransferase superfamily. RNA methyltransferase RlmE family.

The protein resides in the cytoplasm. It carries out the reaction uridine(2552) in 23S rRNA + S-adenosyl-L-methionine = 2'-O-methyluridine(2552) in 23S rRNA + S-adenosyl-L-homocysteine + H(+). Functionally, specifically methylates the uridine in position 2552 of 23S rRNA at the 2'-O position of the ribose in the fully assembled 50S ribosomal subunit. This chain is Ribosomal RNA large subunit methyltransferase E, found in Acidithiobacillus ferrooxidans (strain ATCC 23270 / DSM 14882 / CIP 104768 / NCIMB 8455) (Ferrobacillus ferrooxidans (strain ATCC 23270)).